A 122-amino-acid chain; its full sequence is Large ribosomal subunit protein uL14 (122 aa).

The protein belongs to the universal ribosomal protein uL14 family. As to quaternary structure, part of the 50S ribosomal subunit. Forms a cluster with proteins L3 and L19. In the 70S ribosome, L14 and L19 interact and together make contacts with the 16S rRNA in bridges B5 and B8.

Functionally, binds to 23S rRNA. Forms part of two intersubunit bridges in the 70S ribosome. The polypeptide is Large ribosomal subunit protein uL14 (Lactobacillus delbrueckii subsp. bulgaricus (strain ATCC BAA-365 / Lb-18)).